The primary structure comprises 340 residues: Phosphate carrier protein, mitochondrial (340 aa).

Residues 1-27 (MSVFSQLAESSKQNPFSLPVRSGNCAS) constitute a mitochondrion transit peptide. Solcar repeat units follow at residues 41–125 (KYYA…FKNV), 138–222 (YRTS…TVEA), and 239–317 (EQLV…VKVA). 6 helical membrane-spanning segments follow: residues 47–67 (ALGG…LDLV), 95–114 (RALV…QGLG), 141–161 (SLYL…LAPM), 200–220 (PLWM…EKTV), 241–261 (LVVT…VSHP), and 297–317 (IIMI…VKVA).

This sequence belongs to the mitochondrial carrier (TC 2.A.29) family.

The protein resides in the mitochondrion inner membrane. Functionally, transport of phosphate groups from the cytosol to the mitochondrial matrix. In Caenorhabditis elegans, this protein is Phosphate carrier protein, mitochondrial.